Consider the following 352-residue polypeptide: Sulfate-binding protein (352 aa).

A signal peptide spans 1–40; the sequence is MARSAFGWGFSVIAVLMVGSITACNTTTTTEPGQGENASQ.

Belongs to the prokaryotic sulfate-binding protein family.

The protein resides in the periplasm. Its function is as follows. This protein specifically binds sulfate and is involved in its transmembrane transport. The sequence is that of Sulfate-binding protein (sbpA) from Synechocystis sp. (strain ATCC 27184 / PCC 6803 / Kazusa).